Consider the following 275-residue polypeptide: Tropinone reductase-like 2 (275 aa).

17 to 41 (IITGGASGIGACTAELFHENGAKVV) serves as a coordination point for NAD(+). Residue serine 150 coordinates substrate. Tyrosine 163 acts as the Proton acceptor in catalysis.

It belongs to the short-chain dehydrogenases/reductases (SDR) family.

Its function is as follows. Has no tropinone reductase activity. The sequence is that of Tropinone reductase-like 2 from Erythroxylum coca (Coca plant).